Reading from the N-terminus, the 315-residue chain is Secreted frizzled-related protein 5 (315 aa).

The first 27 residues, 1–27 (MRAAAGGARAAVLALLLGALHGAPARG), serve as a signal peptide directing secretion. Positions 46 to 163 (SKPPQCLDIP…PLDNDLCIAV (118 aa)) constitute an FZ domain. Disulfide bonds link cysteine 51/cysteine 114, cysteine 61/cysteine 107, cysteine 98/cysteine 133, cysteine 122/cysteine 160, cysteine 126/cysteine 150, cysteine 179/cysteine 251, cysteine 182/cysteine 253, and cysteine 196/cysteine 301. In terms of domain architecture, NTR spans 179–301 (CAQCEMEHSA…AVKFMFSYPC (123 aa)).

Belongs to the secreted frizzled-related protein (sFRP) family. As to expression, strongly expressed in the retinal pigment epithelium (RPE). Weak expression in retina, brain, heart, liver, kidney, testis and muscle.

The protein localises to the secreted. Soluble frizzled-related proteins (sFRPS) function as modulators of Wnt signaling through direct interaction with Wnts. They have a role in regulating cell growth and differentiation in specific cell types. SFRP5 may be involved in determining the polarity of photoreceptor, and perhaps other, cells in the retina. Inhibits Wnt8 signaling, in vitro. The polypeptide is Secreted frizzled-related protein 5 (SFRP5) (Bos taurus (Bovine)).